A 217-amino-acid chain; its full sequence is Putative cobalt transport protein CbiM (217 aa).

Helical transmembrane passes span 8–28 (LPPE…VYGA), 44–64 (LIAV…PSVT), 74–94 (GIAV…IVLL), 107–127 (TLGA…WIAF), 139–161 (VFAA…LALA), and 181–201 (IFAV…VMLV).

It belongs to the CbiM family. As to quaternary structure, forms an energy-coupling factor (ECF) transporter complex composed of an ATP-binding protein (A component, CbiO), a transmembrane protein (T component, CbiQ) and 2 possible substrate-capture proteins (S components, CbiM and CbiN) of unknown stoichimetry.

It localises to the cell membrane. It participates in cofactor biosynthesis; adenosylcobalamin biosynthesis. Part of the energy-coupling factor (ECF) transporter complex CbiMNOQ involved in cobalt import. The protein is Putative cobalt transport protein CbiM of Archaeoglobus fulgidus (strain ATCC 49558 / DSM 4304 / JCM 9628 / NBRC 100126 / VC-16).